The chain runs to 81 residues: Conotoxin Lt6.4 (81 aa).

A signal peptide spans M1 to G19. Residues A20–P42 constitute a propeptide that is removed on maturation. 3 cysteine pairs are disulfide-bonded: C46–C60, C53–C65, and C59–C80.

Belongs to the conotoxin I3 superfamily. Expressed by the venom duct.

Its subcellular location is the secreted. The sequence is that of Conotoxin Lt6.4 from Conus litteratus (Lettered cone).